Consider the following 379-residue polypeptide: Cytochrome b (379 aa).

4 consecutive transmembrane segments (helical) span residues 33 to 53 (FGSL…FLAM), 77 to 98 (WLIR…YIHI), 113 to 133 (WNIG…GYVL), and 178 to 198 (FFAF…VHLL). Heme b is bound by residues H83 and H97. Residues H182 and H196 each contribute to the heme b site. H201 lines the a ubiquinone pocket. 4 helical membrane passes run 226–246 (TKDF…VLYF), 288–308 (LGGV…PYIH), 320–340 (ISQF…WIGG), and 347–367 (FIII…IXMX).

Belongs to the cytochrome b family. In terms of assembly, the cytochrome bc1 complex contains 11 subunits: 3 respiratory subunits (MT-CYB, CYC1 and UQCRFS1), 2 core proteins (UQCRC1 and UQCRC2) and 6 low-molecular weight proteins (UQCRH/QCR6, UQCRB/QCR7, UQCRQ/QCR8, UQCR10/QCR9, UQCR11/QCR10 and a cleavage product of UQCRFS1). This cytochrome bc1 complex then forms a dimer. Heme b serves as cofactor.

The protein localises to the mitochondrion inner membrane. Component of the ubiquinol-cytochrome c reductase complex (complex III or cytochrome b-c1 complex) that is part of the mitochondrial respiratory chain. The b-c1 complex mediates electron transfer from ubiquinol to cytochrome c. Contributes to the generation of a proton gradient across the mitochondrial membrane that is then used for ATP synthesis. The protein is Cytochrome b (MT-CYB) of Thomomys umbrinus (Southern pocket gopher).